A 154-amino-acid polypeptide reads, in one-letter code: Superoxide dismutase [Cu-Zn] (154 aa).

Residues histidine 47, histidine 49, and histidine 64 each contribute to the Cu cation site. The cysteines at positions 58 and 147 are disulfide-linked. Zn(2+) is bound by residues histidine 64, histidine 72, histidine 81, and aspartate 84. Histidine 121 contributes to the Cu cation binding site. Residues 126–137 show a composition bias toward basic and acidic residues; sequence DLGRGGNEESKK. Residues 126-147 are disordered; sequence DLGRGGNEESKKTGNAGPRPAC.

Belongs to the Cu-Zn superoxide dismutase family. As to quaternary structure, homodimer. It depends on Cu cation as a cofactor. The cofactor is Zn(2+).

It localises to the cytoplasm. The enzyme catalyses 2 superoxide + 2 H(+) = H2O2 + O2. Functionally, destroys radicals which are normally produced within the cells and which are toxic to biological systems. Plays an important role in the phase transition, and may be important in vivo, as it would facilitate the intracellular survival of the fungus by providing a non-toxic environment in the macrophage phagolysosomes. The sequence is that of Superoxide dismutase [Cu-Zn] from Talaromyces marneffei (Penicillium marneffei).